Here is a 264-residue protein sequence, read N- to C-terminus: Thymidylate synthase (264 aa).

Arg21 contributes to the dUMP binding site. His51 serves as a coordination point for (6R)-5,10-methylene-5,6,7,8-tetrahydrofolate. A dUMP-binding site is contributed by 126–127; the sequence is RR. The active-site Nucleophile is the Cys146. DUMP contacts are provided by residues 166–169, Asn177, and 207–209; these read RSAD and HLY. (6R)-5,10-methylene-5,6,7,8-tetrahydrofolate is bound at residue Asp169. Ala263 contacts (6R)-5,10-methylene-5,6,7,8-tetrahydrofolate.

It belongs to the thymidylate synthase family. Bacterial-type ThyA subfamily. Homodimer.

The protein resides in the cytoplasm. The catalysed reaction is dUMP + (6R)-5,10-methylene-5,6,7,8-tetrahydrofolate = 7,8-dihydrofolate + dTMP. It participates in pyrimidine metabolism; dTTP biosynthesis. Its function is as follows. Catalyzes the reductive methylation of 2'-deoxyuridine-5'-monophosphate (dUMP) to 2'-deoxythymidine-5'-monophosphate (dTMP) while utilizing 5,10-methylenetetrahydrofolate (mTHF) as the methyl donor and reductant in the reaction, yielding dihydrofolate (DHF) as a by-product. This enzymatic reaction provides an intracellular de novo source of dTMP, an essential precursor for DNA biosynthesis. This is Thymidylate synthase from Legionella pneumophila (strain Paris).